A 558-amino-acid polypeptide reads, in one-letter code: Dihydroxy-acid dehydratase (558 aa).

Residue Cys54 participates in [2Fe-2S] cluster binding. Asp86 is a Mg(2+) binding site. Cys127 provides a ligand contact to [2Fe-2S] cluster. Positions 128 and 129 each coordinate Mg(2+). Lys129 bears the N6-carboxylysine mark. Cys199 is a binding site for [2Fe-2S] cluster. Residue Glu448 participates in Mg(2+) binding. Ser474 acts as the Proton acceptor in catalysis.

Belongs to the IlvD/Edd family. In terms of assembly, homodimer. [2Fe-2S] cluster serves as cofactor. Requires Mg(2+) as cofactor.

It carries out the reaction (2R)-2,3-dihydroxy-3-methylbutanoate = 3-methyl-2-oxobutanoate + H2O. It catalyses the reaction (2R,3R)-2,3-dihydroxy-3-methylpentanoate = (S)-3-methyl-2-oxopentanoate + H2O. Its pathway is amino-acid biosynthesis; L-isoleucine biosynthesis; L-isoleucine from 2-oxobutanoate: step 3/4. The protein operates within amino-acid biosynthesis; L-valine biosynthesis; L-valine from pyruvate: step 3/4. Functions in the biosynthesis of branched-chain amino acids. Catalyzes the dehydration of (2R,3R)-2,3-dihydroxy-3-methylpentanoate (2,3-dihydroxy-3-methylvalerate) into 2-oxo-3-methylpentanoate (2-oxo-3-methylvalerate) and of (2R)-2,3-dihydroxy-3-methylbutanoate (2,3-dihydroxyisovalerate) into 2-oxo-3-methylbutanoate (2-oxoisovalerate), the penultimate precursor to L-isoleucine and L-valine, respectively. The polypeptide is Dihydroxy-acid dehydratase (Acidothermus cellulolyticus (strain ATCC 43068 / DSM 8971 / 11B)).